Consider the following 62-residue polypeptide: DNA-directed RNA polymerase subunit Rpo10 (62 aa).

Positions 6, 9, 43, and 44 each coordinate Zn(2+).

Belongs to the archaeal Rpo10/eukaryotic RPB10 RNA polymerase subunit family. Part of the RNA polymerase complex. Requires Zn(2+) as cofactor.

The protein resides in the cytoplasm. The catalysed reaction is RNA(n) + a ribonucleoside 5'-triphosphate = RNA(n+1) + diphosphate. Its function is as follows. DNA-dependent RNA polymerase (RNAP) catalyzes the transcription of DNA into RNA using the four ribonucleoside triphosphates as substrates. This Methanoregula boonei (strain DSM 21154 / JCM 14090 / 6A8) protein is DNA-directed RNA polymerase subunit Rpo10.